A 689-amino-acid chain; its full sequence is Protein asunder (689 aa).

A coiled-coil region spans residues 521–550 (NGARLKLSKAKDQYRLLYRELEQLIQLNAT). 2 disordered regions span residues 592–619 (PERL…SKRR) and 665–689 (GTKD…SVRS). The span at 599–614 (SSVGASGSSSSNSLLK) shows a compositional bias: low complexity. The Nuclear localization signal (NLS) motif lies at 613–619 (LKASKRR).

It belongs to the Integrator subunit 13 family. Belongs to the multiprotein complex Integrator, at least composed of IntS1, IntS2, IntS3, IntS4, omd/IntS5, IntS6, defl/IntS7, IntS8, IntS9, IntS10, IntS11, IntS12, asun/IntS13, IntS14 and IntS15. The core complex associates with protein phosphatase 2A subunits mts/PP2A and Pp2A-29B, to form the Integrator-PP2A (INTAC) complex. In terms of processing, phosphorylated. Expressed in nurse cells at stages 9-10 of oogenesis and exported to the oocyte. Also expressed in the follicle cells surrounding the oocyte.

The protein localises to the nucleus. It is found in the cytoplasm. Its subcellular location is the perinuclear region. In terms of biological role, component of the integrator complex, a multiprotein complex that terminates RNA polymerase II (Pol II) transcription in the promoter-proximal region of genes. The integrator complex provides a quality checkpoint during transcription elongation by driving premature transcription termination of transcripts that are unfavorably configured for transcriptional elongation: the complex terminates transcription by (1) catalyzing dephosphorylation of the C-terminal domain (CTD) of Pol II subunit Polr2A/Rbp1 and Spt5, and (2) degrading the exiting nascent RNA transcript via endonuclease activity. The integrator complex is also involved in the 3'-end processing of the U7 snRNA, and also the spliceosomal snRNAs U1, U2, U4 and U5. Plays a role as a regulator of spermatogenesis. Crucial regulator of the mitotic cell cycle and development. Required for the correct dynein-dynactin perinuclear localization important for nucleus-centrosome coupling that occur upon meiotic progression of primary spermatocytes. Plays a role in sperm motility and fertility. May have a role in the PNG/PLU/GNU pathway. The protein is Protein asunder of Drosophila melanogaster (Fruit fly).